Consider the following 158-residue polypeptide: Copper transporter 2 (158 aa).

The disordered stretch occupies residues 1–20 (MDHDHMHDMPPPSPSSSSMS). 2 helical membrane passes run 53-73 (GMYALCLIVIFLLAVIAEWLA) and 104-124 (YLVMLAVMSFNAGVFIVAIAG).

The protein belongs to the copper transporter (Ctr) (TC 1.A.56) family. SLC31A subfamily. Highly expressed in leaves and at lower levels in roots, stems and flowers.

The protein resides in the membrane. Functionally, involved in the transport of copper. In Arabidopsis thaliana (Mouse-ear cress), this protein is Copper transporter 2 (COPT2).